Reading from the N-terminus, the 492-residue chain is Cytoplasmic dynein 1 light intermediate chain 2 (492 aa).

ATP is bound at residue 61–68 (GEDGSGKT). Disordered regions lie at residues 187 to 206 (PEEGCQGSPQRRGPLTSGSD), 371 to 423 (AKQP…KNNA), and 437 to 492 (LSKK…ENEA). S194 is modified (phosphoserine). A compositionally biased stretch (polar residues) spans 371–381 (AKQPATPTRAS). 2 positions are modified to phosphoserine: S383 and S391. Residue R397 is modified to Omega-N-methylarginine. Over residues 400–412 (PASVPSSSPGTSV) the composition is skewed to low complexity. T441 carries the phosphothreonine modification. Phosphoserine occurs at positions 443 and 446. Residues 452–469 (VQSTAKKSGQKTVLSNVQ) are compositionally biased toward polar residues. The span at 471-480 (ELDRMTRKPD) shows a compositional bias: basic and acidic residues. Polar residues predominate over residues 482–492 (MVTNSSTENEA).

It belongs to the dynein light intermediate chain family. Homodimer. The cytoplasmic dynein 1 complex consists of two catalytic heavy chains (HCs) and a number of non-catalytic subunits presented by intermediate chains (ICs), light intermediate chains (LICs) and light chains (LCs); the composition seems to vary in respect to the IC, LIC and LC composition. The heavy chain homodimer serves as a scaffold for the probable homodimeric assembly of the respective non-catalytic subunits. The ICs and LICs bind directly to the HC dimer and the LCs assemble on the IC dimer. Interacts with DYNC1H1; DYNC1LI1 and DYNC1LI2 bind mutually exclusive to DYNC1H.

The protein resides in the cytoplasm. Its subcellular location is the cytoskeleton. In terms of biological role, acts as one of several non-catalytic accessory components of the cytoplasmic dynein 1 complex that are thought to be involved in linking dynein to cargos and to adapter proteins that regulate dynein function. Cytoplasmic dynein 1 acts as a motor for the intracellular retrograde motility of vesicles and organelles along microtubules. May play a role in binding dynein to membranous organelles or chromosomes. This Homo sapiens (Human) protein is Cytoplasmic dynein 1 light intermediate chain 2.